A 245-amino-acid chain; its full sequence is 2,3-bisphosphoglycerate-dependent phosphoglycerate mutase (245 aa).

Substrate-binding positions include 8–15 (RHGQSLWN), 21–22 (TG), R60, 87–90 (ERHY), K98, 114–115 (RR), and 183–184 (GN). The active-site Tele-phosphohistidine intermediate is H9. E87 (proton donor/acceptor) is an active-site residue.

Belongs to the phosphoglycerate mutase family. BPG-dependent PGAM subfamily.

It catalyses the reaction (2R)-2-phosphoglycerate = (2R)-3-phosphoglycerate. It participates in carbohydrate degradation; glycolysis; pyruvate from D-glyceraldehyde 3-phosphate: step 3/5. Its function is as follows. Catalyzes the interconversion of 2-phosphoglycerate and 3-phosphoglycerate. The polypeptide is 2,3-bisphosphoglycerate-dependent phosphoglycerate mutase (Bacillus thuringiensis subsp. konkukian (strain 97-27)).